The primary structure comprises 94 residues: Co-chaperonin GroES (94 aa).

The protein belongs to the GroES chaperonin family. Heptamer of 7 subunits arranged in a ring. Interacts with the chaperonin GroEL.

The protein localises to the cytoplasm. Functionally, together with the chaperonin GroEL, plays an essential role in assisting protein folding. The GroEL-GroES system forms a nano-cage that allows encapsulation of the non-native substrate proteins and provides a physical environment optimized to promote and accelerate protein folding. GroES binds to the apical surface of the GroEL ring, thereby capping the opening of the GroEL channel. In Clostridium perfringens (strain SM101 / Type A), this protein is Co-chaperonin GroES.